A 184-amino-acid polypeptide reads, in one-letter code: NADH-quinone oxidoreductase subunit B (184 aa).

Positions 37, 38, 103, and 132 each coordinate [4Fe-4S] cluster.

The protein belongs to the complex I 20 kDa subunit family. As to quaternary structure, NDH-1 is composed of 14 different subunits. Subunits NuoB, C, D, E, F, and G constitute the peripheral sector of the complex. [4Fe-4S] cluster is required as a cofactor.

It is found in the cell membrane. It carries out the reaction a quinone + NADH + 5 H(+)(in) = a quinol + NAD(+) + 4 H(+)(out). Functionally, NDH-1 shuttles electrons from NADH, via FMN and iron-sulfur (Fe-S) centers, to quinones in the respiratory chain. The immediate electron acceptor for the enzyme in this species is believed to be a menaquinone. Couples the redox reaction to proton translocation (for every two electrons transferred, four hydrogen ions are translocated across the cytoplasmic membrane), and thus conserves the redox energy in a proton gradient. In Mycolicibacterium paratuberculosis (strain ATCC BAA-968 / K-10) (Mycobacterium paratuberculosis), this protein is NADH-quinone oxidoreductase subunit B.